The following is a 360-amino-acid chain: Ribosomal RNA large subunit methyltransferase M (360 aa).

S-adenosyl-L-methionine-binding positions include Ser190, 223–226 (CPGG), Asp242, Asp262, and Asp280. The Proton acceptor role is filled by Lys309.

Belongs to the class I-like SAM-binding methyltransferase superfamily. RNA methyltransferase RlmE family. RlmM subfamily. In terms of assembly, monomer.

The protein resides in the cytoplasm. The enzyme catalyses cytidine(2498) in 23S rRNA + S-adenosyl-L-methionine = 2'-O-methylcytidine(2498) in 23S rRNA + S-adenosyl-L-homocysteine + H(+). Functionally, catalyzes the 2'-O-methylation at nucleotide C2498 in 23S rRNA. This Haemophilus ducreyi (strain 35000HP / ATCC 700724) protein is Ribosomal RNA large subunit methyltransferase M.